A 614-amino-acid chain; its full sequence is Probable peptide-binding protein YejA (614 aa).

The signal sequence occupies residues 1–27 (MILAPLKSRILIALAASALLIPAVASA).

The protein belongs to the bacterial solute-binding protein 5 family. As to quaternary structure, the complex is composed of one ATP-binding protein (YejF), two transmembrane proteins (YejB and YejE) and a solute-binding protein (YejA).

The protein localises to the periplasm. In terms of biological role, probably part of the ABC transporter complex YejABEF, which is likely involved in broad-spectrum peptide import. The sequence is that of Probable peptide-binding protein YejA from Agrobacterium fabrum (strain C58 / ATCC 33970) (Agrobacterium tumefaciens (strain C58)).